Here is a 505-residue protein sequence, read N- to C-terminus: RNA-splicing ligase RtcB homolog (505 aa).

Mn(2+) is bound by residues Asp-119, Cys-122, His-227, and His-259. Asn-226 to Glu-230 serves as a coordination point for GMP. Ser-300 is modified (phosphoserine). His-353 contributes to the Mn(2+) binding site. GMP contacts are provided by residues His-353–Asn-354, Gly-402–Met-405, Ser-409, and His-428–Gly-431. Catalysis depends on His-428, which acts as the GMP-histidine intermediate. Residue Lys-496 forms a Glycyl lysine isopeptide (Lys-Gly) (interchain with G-Cter in SUMO2) linkage. Lys-504 contributes to the GMP binding site.

Belongs to the RtcB family. In terms of assembly, catalytic component of the tRNA-splicing ligase complex. It depends on Mn(2+) as a cofactor.

The protein localises to the nucleus. The protein resides in the cytoplasm. The enzyme catalyses a 3'-end 3'-phospho-ribonucleotide-RNA + a 5'-end dephospho-ribonucleoside-RNA + GTP = a ribonucleotidyl-ribonucleotide-RNA + GMP + diphosphate. It carries out the reaction a 3'-end 2',3'-cyclophospho-ribonucleotide-RNA + a 5'-end dephospho-ribonucleoside-RNA + GTP + H2O = a ribonucleotidyl-ribonucleotide-RNA + GMP + diphosphate + H(+). Its function is as follows. Catalytic subunit of the tRNA-splicing ligase complex that acts by directly joining spliced tRNA halves to mature-sized tRNAs by incorporating the precursor-derived splice junction phosphate into the mature tRNA as a canonical 3',5'-phosphodiester. May act as an RNA ligase with broad substrate specificity, and may function toward other RNAs. This is RNA-splicing ligase RtcB homolog from Rattus norvegicus (Rat).